A 72-amino-acid polypeptide reads, in one-letter code: uncharacterized protein (72 aa).

A disordered region spans residues 1–53 (MTNEPSTSTPTSTSTSTSTSTSTSTTTLTSTSSTPTSTSTSTSTSTSTSTSTS).

This is an uncharacterized protein from Dictyostelium discoideum (Social amoeba).